A 97-amino-acid chain; its full sequence is Large ribosomal subunit protein uL23 (97 aa).

Belongs to the universal ribosomal protein uL23 family. As to quaternary structure, part of the 50S ribosomal subunit. Contacts protein L29, and trigger factor when it is bound to the ribosome.

Functionally, one of the early assembly proteins it binds 23S rRNA. One of the proteins that surrounds the polypeptide exit tunnel on the outside of the ribosome. Forms the main docking site for trigger factor binding to the ribosome. The sequence is that of Large ribosomal subunit protein uL23 from Pelagibacter ubique (strain HTCC1062).